A 67-amino-acid polypeptide reads, in one-letter code: Small ribosomal subunit protein eS17 (67 aa).

This sequence belongs to the eukaryotic ribosomal protein eS17 family.

The polypeptide is Small ribosomal subunit protein eS17 (Thermococcus gammatolerans (strain DSM 15229 / JCM 11827 / EJ3)).